A 967-amino-acid polypeptide reads, in one-letter code: Phosphoenolpyruvate carboxylase (967 aa).

Position 10 is a phosphoserine (S10). Residues H171 and K601 contribute to the active site. The interval 915–936 is disordered; the sequence is NASRLPLSRESPEATKPADELV. Basic and acidic residues predominate over residues 924-933; sequence ESPEATKPAD.

It belongs to the PEPCase type 1 family. In terms of assembly, homotetramer. Mg(2+) serves as cofactor.

Its subcellular location is the cytoplasm. The catalysed reaction is oxaloacetate + phosphate = phosphoenolpyruvate + hydrogencarbonate. With respect to regulation, by light-reversible phosphorylation. In terms of biological role, through the carboxylation of phosphoenolpyruvate (PEP) it forms oxaloacetate, a four-carbon dicarboxylic acid source for the tricarboxylic acid cycle. This Pisum sativum (Garden pea) protein is Phosphoenolpyruvate carboxylase.